The chain runs to 375 residues: uncharacterized protein (375 aa).

Lysine 99 is covalently cross-linked (Isoglutamyl lysine isopeptide (Lys-Gln) (interchain with Q-Cter in protein Pup)).

This sequence belongs to the IMPDH/GMPR family.

This is an uncharacterized protein from Mycolicibacterium smegmatis (strain ATCC 700084 / mc(2)155) (Mycobacterium smegmatis).